A 178-amino-acid polypeptide reads, in one-letter code: MLEGVIRESITKANAKALKKDGYLIANVYGKGIENVNCAFKLNPFIKYLKEKKHLIFPVKLGDKTFEVVVQEYQKNPVTNELIHVDLLAVTKGVKSKFKVPVKHQGTPVGLKNKGILMLSKKRISVECAPEHLPDHYLVDVAPLDVNESILVRDLEKHENVKILDHDSIAVIGVIKAK.

This sequence belongs to the bacterial ribosomal protein bL25 family. CTC subfamily. As to quaternary structure, part of the 50S ribosomal subunit; part of the 5S rRNA/L5/L18/L25 subcomplex. Contacts the 5S rRNA. Binds to the 5S rRNA independently of L5 and L18.

Functionally, this is one of the proteins that binds to the 5S RNA in the ribosome where it forms part of the central protuberance. The polypeptide is Large ribosomal subunit protein bL25 (Helicobacter pylori (strain G27)).